Reading from the N-terminus, the 135-residue chain is Nucleoside diphosphate kinase (135 aa).

ATP-binding residues include K9, Y57, R85, T91, R102, and N112. H115 serves as the catalytic Pros-phosphohistidine intermediate.

It belongs to the NDK family. Homotetramer. Mg(2+) is required as a cofactor.

The protein resides in the cytoplasm. The catalysed reaction is a 2'-deoxyribonucleoside 5'-diphosphate + ATP = a 2'-deoxyribonucleoside 5'-triphosphate + ADP. The enzyme catalyses a ribonucleoside 5'-diphosphate + ATP = a ribonucleoside 5'-triphosphate + ADP. Its function is as follows. Major role in the synthesis of nucleoside triphosphates other than ATP. The ATP gamma phosphate is transferred to the NDP beta phosphate via a ping-pong mechanism, using a phosphorylated active-site intermediate. The polypeptide is Nucleoside diphosphate kinase (Thermoanaerobacter pseudethanolicus (strain ATCC 33223 / 39E) (Clostridium thermohydrosulfuricum)).